The following is a 395-amino-acid chain: Flap endonuclease 1 (395 aa).

An N-domain region spans residues 1-108 (MGILGLSKLL…DELETRRQKA (108 aa)). D34 is a binding site for Mg(2+). R74 provides a ligand contact to DNA. D90, E162, E164, D183, and D185 together coordinate Mg(2+). Residues 126–257 (MMEKMSKRTV…QRAWEGIQRY (132 aa)) form an I-domain region. E162 is a binding site for DNA. DNA-binding residues include G235 and D237. D237 provides a ligand contact to Mg(2+). Residues 340–348 (TQGRLDNFF) form an interaction with PCNA region.

This sequence belongs to the XPG/RAD2 endonuclease family. FEN1 subfamily. In terms of assembly, interacts with PCNA. Three molecules of FEN1 bind to one PCNA trimer with each molecule binding to one PCNA monomer. PCNA stimulates the nuclease activity without altering cleavage specificity. Requires Mg(2+) as cofactor. Phosphorylated. Phosphorylation upon DNA damage induces relocalization to the nuclear plasma.

Its subcellular location is the nucleus. It localises to the nucleolus. The protein resides in the nucleoplasm. The protein localises to the mitochondrion. Functionally, structure-specific nuclease with 5'-flap endonuclease and 5'-3' exonuclease activities involved in DNA replication and repair. During DNA replication, cleaves the 5'-overhanging flap structure that is generated by displacement synthesis when DNA polymerase encounters the 5'-end of a downstream Okazaki fragment. It enters the flap from the 5'-end and then tracks to cleave the flap base, leaving a nick for ligation. Also involved in the long patch base excision repair (LP-BER) pathway, by cleaving within the apurinic/apyrimidinic (AP) site-terminated flap. Acts as a genome stabilization factor that prevents flaps from equilibrating into structures that lead to duplications and deletions. Also possesses 5'-3' exonuclease activity on nicked or gapped double-stranded DNA, and exhibits RNase H activity. Also involved in replication and repair of rDNA and in repairing mitochondrial DNA. The chain is Flap endonuclease 1 from Leishmania braziliensis.